A 210-amino-acid polypeptide reads, in one-letter code: 2-hydroxy-3-keto-5-methylthiopentenyl-1-phosphate phosphatase (210 aa).

The protein belongs to the HAD-like hydrolase superfamily. MtnX family.

It carries out the reaction 2-hydroxy-5-methylsulfanyl-3-oxopent-1-enyl phosphate + H2O = 1,2-dihydroxy-5-(methylsulfanyl)pent-1-en-3-one + phosphate. It participates in amino-acid biosynthesis; L-methionine biosynthesis via salvage pathway; L-methionine from S-methyl-5-thio-alpha-D-ribose 1-phosphate: step 4/6. Functionally, dephosphorylates 2-hydroxy-3-keto-5-methylthiopentenyl-1-phosphate (HK-MTPenyl-1-P) yielding 1,2-dihydroxy-3-keto-5-methylthiopentene (DHK-MTPene). The chain is 2-hydroxy-3-keto-5-methylthiopentenyl-1-phosphate phosphatase from Microcystis aeruginosa (strain NIES-843 / IAM M-2473).